We begin with the raw amino-acid sequence, 509 residues long: 2,3-bisphosphoglycerate-independent phosphoglycerate mutase (509 aa).

Residue aspartate 11 coordinates Mn(2+). The residue at position 35 (tyrosine 35) is a Phosphotyrosine. Residue serine 61 participates in Mn(2+) binding. Serine 61 (phosphoserine intermediate) is an active-site residue. Substrate-binding positions include histidine 122, 152-153 (RD), arginine 184, arginine 190, 260-263 (RPDR), and lysine 335. Residues aspartate 402, histidine 406, aspartate 443, histidine 444, and histidine 461 each coordinate Mn(2+).

Belongs to the BPG-independent phosphoglycerate mutase family. In terms of assembly, monomer. Mn(2+) is required as a cofactor.

It carries out the reaction (2R)-2-phosphoglycerate = (2R)-3-phosphoglycerate. Its pathway is carbohydrate degradation; glycolysis; pyruvate from D-glyceraldehyde 3-phosphate: step 3/5. Its function is as follows. Essential for rapid growth and for sporulation. Catalyzes the interconversion of 2-phosphoglycerate and 3-phosphoglycerate. This chain is 2,3-bisphosphoglycerate-independent phosphoglycerate mutase, found in Bacillus cereus (strain ATCC 14579 / DSM 31 / CCUG 7414 / JCM 2152 / NBRC 15305 / NCIMB 9373 / NCTC 2599 / NRRL B-3711).